The following is a 170-amino-acid chain: Adenine phosphoribosyltransferase (170 aa).

The protein belongs to the purine/pyrimidine phosphoribosyltransferase family. Homodimer.

The protein resides in the cytoplasm. The catalysed reaction is AMP + diphosphate = 5-phospho-alpha-D-ribose 1-diphosphate + adenine. It participates in purine metabolism; AMP biosynthesis via salvage pathway; AMP from adenine: step 1/1. In terms of biological role, catalyzes a salvage reaction resulting in the formation of AMP, that is energically less costly than de novo synthesis. This chain is Adenine phosphoribosyltransferase, found in Alkaliphilus metalliredigens (strain QYMF).